Here is a 324-residue protein sequence, read N- to C-terminus: Mevalonate-3-kinase (324 aa).

Substrate is bound at residue Leu19. 109 to 112 (SGSS) contributes to the ATP binding site. The substrate site is built by Glu145 and Arg149. Arg190 and Ser193 together coordinate ATP.

Belongs to the GHMP kinase family. In terms of assembly, homodimer.

It carries out the reaction (R)-mevalonate + ATP = (R)-3-phosphomevalonate + ADP + H(+). It participates in isoprenoid biosynthesis; isopentenyl diphosphate biosynthesis via mevalonate pathway. Catalyzes the phosphorylation of mevalonate (MVA) to yield mevalonate-3-phosphate. Functions in an alternative mevalonate pathway, which passes through mevalonate 3-phosphate rather than mevalonate 5-phosphate. Also able to catalyze the formation of isobutene via the conversion of 3-hydroxyisovalerate (3-HIV) to an unstable 3-phosphate intermediate that undergoes a spontaneous decarboxylation. This Picrophilus torridus (strain ATCC 700027 / DSM 9790 / JCM 10055 / NBRC 100828 / KAW 2/3) protein is Mevalonate-3-kinase.